The following is a 173-amino-acid chain: Spermidine N(1)-acetyltransferase (173 aa).

The N-acetyltransferase domain maps to 5–162 (LTLRALERGD…GRYQDVKRMY (158 aa)). Residues methionine 28, glutamate 33, glutamate 41, and 49 to 52 (HIHD) contribute to the spermine site. Mg(2+) is bound at residue glutamate 33. 2 residues coordinate spermidine: glutamate 33 and glutamate 41. Glutamate 75 serves as a coordination point for Mg(2+). 84 to 86 (EFQ) is a binding site for spermine. Residues 87–89 (III), 94–100 (QGKGFAR), and 127–136 (NPKAVHLYEE) contribute to the acetyl-CoA site. The active-site Proton donor is the tyrosine 134.

Belongs to the acetyltransferase family. In terms of assembly, homododecamer; dimer of hexamers. Exists in solution in a variety of protein homooligomeric states including dodecamers in an open state. The presence of the polyamines spermidine or spermine shifts the equilibrium to dodecamers and induces the formation of the closed, symmetric dodecamers.

It localises to the cytoplasm. It catalyses the reaction an alkane-alpha,omega-diamine + acetyl-CoA = an N-acetylalkane-alpha,omega-diamine + CoA + H(+). The enzyme catalyses spermidine + acetyl-CoA = N(1)-acetylspermidine + CoA + H(+). The catalysed reaction is spermidine + acetyl-CoA = N(8)-acetylspermidine + CoA + H(+). It carries out the reaction spermine + acetyl-CoA = N(1)-acetylspermine + CoA + H(+). Its pathway is amine and polyamine degradation; spermidine degradation. It functions in the pathway amine and polyamine degradation; spermine degradation. Its activity is regulated as follows. Allosterically regulated by polyamines. Polyamines trigger conformational changes and induce the symmetric closed dodecameric state of the protein when they bind to their allosteric sites. Involved in the protection against polyamine toxicity by regulating their concentration. Catalyzes the transfer of an acetyl group from acetyl coenzyme A (AcCoA) to the primary amino groups of spermidine to yield N(1)- and N(8)-acetylspermidine. It can use polyamines such as spermine and N(1)-acetylspermine, but not putrescine or cadaverine. The protein is Spermidine N(1)-acetyltransferase (speG) of Vibrio cholerae serotype O1 (strain ATCC 39315 / El Tor Inaba N16961).